The chain runs to 339 residues: MLILGIESSCDETGLALYDTERGLLAHALHSQIDMHAAYGGVVPELASRDHIRRTLPLTQHVLEQAGKSLADLDGIAYTQGPGLSGALLVGTSIAESLAFSLDLPTIGVHHLEGHLLAPLLEPDPPAFPFVALLVSGGHTQLMRVSAIGDYELLGDTLDDAAGEAFDKTAKLLGLSYPGGPAVSRLANQGQPGACQLPRPMLNSGDLNFSFSGLKTAVLTLVNQYGDALDETARANIAYEFQEAVTEVLTKKCMAALRNTGLNQLIVSGGVGANARLRERLNMAAKRRQYQVHYPRLEFCTDNGAMIAFAGAMRMQHAKQGNHSFTVRPRWDLAELNKP.

His-111 and His-115 together coordinate Fe cation. Substrate is bound by residues 134–138, Asp-167, Gly-180, and Asn-274; that span reads LVSGG. A Fe cation-binding site is contributed by Asp-302.

It belongs to the KAE1 / TsaD family. Fe(2+) is required as a cofactor.

Its subcellular location is the cytoplasm. The catalysed reaction is L-threonylcarbamoyladenylate + adenosine(37) in tRNA = N(6)-L-threonylcarbamoyladenosine(37) in tRNA + AMP + H(+). Required for the formation of a threonylcarbamoyl group on adenosine at position 37 (t(6)A37) in tRNAs that read codons beginning with adenine. Is involved in the transfer of the threonylcarbamoyl moiety of threonylcarbamoyl-AMP (TC-AMP) to the N6 group of A37, together with TsaE and TsaB. TsaD likely plays a direct catalytic role in this reaction. The protein is tRNA N6-adenosine threonylcarbamoyltransferase of Methylobacillus flagellatus (strain ATCC 51484 / DSM 6875 / VKM B-1610 / KT).